An 807-amino-acid polypeptide reads, in one-letter code: FAD-linked oxidoreductase pytB (807 aa).

The signal sequence occupies residues 1–18 (MRFLGIAAVATFSTVVSA). 8 N-linked (GlcNAc...) asparagine glycosylation sites follow: Asn45, Asn106, Asn120, Asn242, Asn295, Asn351, Asn419, and Asn699. Residues 60–231 (FDELPVLLAY…VEFTLSLTSI (172 aa)) form the FAD-binding PCMH-type domain.

Belongs to the oxygen-dependent FAD-linked oxidoreductase family. Requires FAD as cofactor.

It participates in secondary metabolite biosynthesis. FAD-linked oxidoreductase; part of the gene cluster that mediates the biosynthesis of pyranterreones, a family of antioxidative compounds. The first step of pyranonigrins biosynthesis is performed by the hybrid PKS-NRPS synthetase pytA that condenses 4 malonyl-CoA units ato the acetyl starter unit by the modular PKS of pytA. The acyl chain is then connected to an L-serine through the amide bond by the modular NRPS of pytA. A tetramic acid is formed and released from the PKS-NRPS pytA to give pyranterreone 5 with the help of the thioesterase pytI. Pyranterreone 5 could be methylated by pytC to afford pyranterreone 6. Both pyranterreones 5 and 6 are subsequently oxidized by the FAD-linked oxidoreductase pytB and the cytochrome P450 monooxygenase pytD to form the fused gamma-pyrone core, resulting in pyranterreones 7 and 11, respectively. The hydroxy group at C-8 of pyranterreones 7 and 11 are dehydrated by the aspartyl protease pytH to form a delta-7 double bond to give pyranterreones 3 and 1, 2 accordingly. The exo-methylene of pyranterreone 3 could be reduced into a pendant methyl by reductase pytE to provide pyranterreone 4, also known as cordylactam. Pyranterreone 4 can be reconverted to pyranterreone 3 through pytB-catalyzed dehydrogenation or further oxidized to pyranterreones 9 and 10. The protein is FAD-linked oxidoreductase pytB of Aspergillus terreus (strain NIH 2624 / FGSC A1156).